A 265-amino-acid polypeptide reads, in one-letter code: Apolipoprotein A-I (265 aa).

Residues 1–18 (MKALVLTLAVLFFTGSQA) form the signal peptide. 2 consecutive repeat copies span residues 67-88 (LKLL…EQLG) and 89-110 (PVTQ…QEMN). Residues 67-265 (LKLLDNWDSL…DEASKKLNAQ (199 aa)) form a 10 X approximate tandem repeats region. Met-109 is modified (methionine sulfoxide). The 3; half-length repeat unit spans residues 111–121 (KDLEEVKQKVQ). 5 tandem repeats follow at residues 122 to 142 (PYLD…RQKV), 144 to 165 (PLGE…DKLT), 166 to 187 (PLAE…QQLA), 188 to 209 (PYSD…EGGG), and 210 to 230 (SLAE…EKAK). A 9; half-length repeat occupies 231 to 241 (PALEDLRQGLL). The stretch at 242–265 (PVLESLKVSILAAIDEASKKLNAQ) is repeat 10.

This sequence belongs to the apolipoprotein A1/A4/E family. As to quaternary structure, homodimer. Interacts with APOA1BP and CLU. Component of a sperm activating protein complex (SPAP), consisting of APOA1, an immunoglobulin heavy chain, an immunoglobulin light chain and albumin. Interacts with NDRG1. Interacts with SCGB3A2. Interacts with NAXE and YJEFN3. In terms of processing, glycosylated. Palmitoylated. Post-translationally, phosphorylation sites are present in the extracellular medium. As to expression, major protein of plasma HDL, also found in chylomicrons.

The protein localises to the secreted. In terms of biological role, participates in the reverse transport of cholesterol from tissues to the liver for excretion by promoting cholesterol efflux from tissues and by acting as a cofactor for the lecithin cholesterol acyltransferase (LCAT). As part of the SPAP complex, activates spermatozoa motility. In Physeter macrocephalus (Sperm whale), this protein is Apolipoprotein A-I (APOA1).